The sequence spans 974 residues: Leucine-rich repeat receptor-like kinase protein SUNN (974 aa).

The signal sequence occupies residues 1-20 (MKNITCYLLLLCMLFTTCYS). N-linked (GlcNAc...) asparagine glycans are attached at residues Asn-75, Asn-104, Asn-123, and Asn-136. 20 LRR repeats span residues 92 to 116 (LNML…LSKL), 117 to 141 (TSLR…TFGM), 143 to 165 (KLEA…IVSL), 166 to 188 (MKLK…SYSE), 189 to 213 (FQKL…LSKL), 238 to 262 (IKSL…LGNL), 263 to 286 (ENLD…LSSM), 288 to 309 (SLMS…TFSK), 310 to 334 (LKNL…IGDL), 335 to 358 (PNLE…LGSN), 360 to 382 (KFIY…LCKS), 383 to 406 (KKLK…IGPC), 407 to 430 (KSLE…IFQL), 431 to 454 (PSVQ…ISGN), 456 to 477 (LGNL…MKNL), 478 to 501 (RSLQ…VFAL), 503 to 525 (VLTR…VTQC), 527 to 549 (SLTA…MKNL), 550 to 573 (KVLS…IRFM), and 574 to 598 (TSLT…QFLV). Residues Asn-250 and Asn-274 are each glycosylated (N-linked (GlcNAc...) asparagine). N-linked (GlcNAc...) asparagine glycans are attached at residues Asn-312 and Asn-346. N-linked (GlcNAc...) asparagine glycans are attached at residues Asn-508 and Asn-513. N-linked (GlcNAc...) asparagine glycosylation is found at Asn-556 and Asn-585. Residues 635 to 655 (VVIAIVFATAVLMVIVTLHMM) traverse the membrane as a helical segment. The 288-residue stretch at 685–972 (LKEENIIGKG…PPHSTSHNLI (288 aa)) folds into the Protein kinase domain. Residues 691 to 699 (IGKGGAGIV) and Lys-713 each bind ATP. The active-site Proton acceptor is the Asp-810.

This sequence belongs to the protein kinase superfamily. Ser/Thr protein kinase family. Expressed in roots and shoots. Expressed in the vasculature of leaves, petioles, stems and roots.

The protein localises to the cell membrane. The enzyme catalyses L-seryl-[protein] + ATP = O-phospho-L-seryl-[protein] + ADP + H(+). It carries out the reaction L-threonyl-[protein] + ATP = O-phospho-L-threonyl-[protein] + ADP + H(+). Functionally, LRR receptor kinase involved in the regulation of root growth and root nodule organogenesis. Involved in long distance nodulation signaling events. Involved in the autoregulation of nodulation (AON), a long distance systemic signaling from root to shoot and back again, which allows legumes to limit the number of root nodules formed based on available nitrogen and previous rhizobial colonization. Acts from shoot to root to control AON. Interacts with CLE12 and CLE13 signaling to control nodule numbers. Required for the modulation of shoot-to-root auxin transport in response to altered nitrogen tissue concentrations and in the absence of rhizobia. Shoot-to-root auxin transport influences lateral root density and length. Involved in the regulation of root colonization by arbuscular mycorrhizal (AM) fungi. Interacts with CLE33 and CL53 signaling to repress strigolactone biosynthetic genes and strigolactone content in the roots, and consequently reduces the promotion of further colonization by AM fungi. This is Leucine-rich repeat receptor-like kinase protein SUNN from Medicago truncatula (Barrel medic).